We begin with the raw amino-acid sequence, 142 residues long: MLRTMLKSKIHRATVTQAYLHYVGSVTIDADLMGAADLLEGEQVTIVDINNGARLVTYAIAGERGTGVIGINGAAAHLVHPGDLVILISYGTMEDAEAHAYQPRIVFVDADNKPIDLGHDPGSVPLDISVAAELFDPRIGAR.

The Schiff-base intermediate with substrate; via pyruvic acid role is filled by Ser25. A Pyruvic acid (Ser) modification is found at Ser25. Thr57 contributes to the substrate binding site. Tyr58 (proton donor) is an active-site residue. Residue 73–75 (GAA) coordinates substrate.

The protein belongs to the PanD family. As to quaternary structure, heterooctamer of four alpha and four beta subunits. It depends on pyruvate as a cofactor. Is synthesized initially as an inactive proenzyme, which is activated by self-cleavage at a specific serine bond to produce a beta-subunit with a hydroxyl group at its C-terminus and an alpha-subunit with a pyruvoyl group at its N-terminus.

It localises to the cytoplasm. It carries out the reaction L-aspartate + H(+) = beta-alanine + CO2. It functions in the pathway cofactor biosynthesis; (R)-pantothenate biosynthesis; beta-alanine from L-aspartate: step 1/1. In terms of biological role, catalyzes the pyruvoyl-dependent decarboxylation of aspartate to produce beta-alanine. The chain is Aspartate 1-decarboxylase from Mycobacterium leprae (strain Br4923).